The sequence spans 375 residues: Actin (375 aa).

This sequence belongs to the actin family.

It localises to the cytoplasm. It is found in the cytoskeleton. The catalysed reaction is ATP + H2O = ADP + phosphate + H(+). In terms of biological role, actins are highly conserved proteins that are involved in various types of cell motility and are ubiquitously expressed in all eukaryotic cells. The protein is Actin of Giardia intestinalis (Giardia lamblia).